A 778-amino-acid polypeptide reads, in one-letter code: Ent-trachylobane synthase KSL2, chloroplastic (778 aa).

The transit peptide at 1-37 (MLLTCTNSLKISSQAKEWESKTLTGMSLEQLNKRIRI) directs the protein to the chloroplast. The Mg(2+) site is built by Asp-529, Asp-533, Asn-672, Asp-673, and Asp-680. The DDXXD motif motif lies at 529-533 (DDFFD).

It belongs to the terpene synthase family. It depends on Mg(2+) as a cofactor.

The protein localises to the plastid. It localises to the chloroplast. It catalyses the reaction ent-copalyl diphosphate = ent-trachylobane + diphosphate. The enzyme catalyses ent-copalyl diphosphate = ent-kaur-16-ene + diphosphate. It participates in secondary metabolite biosynthesis; terpenoid biosynthesis. Diterpene cyclase involved in the biosynthesis of labdane-related diterpenoids (LRDs) natural products. Catalyzes the cyclization of ent-CDP into ent-trachylobane as a major and ent-kaurene as a minor product. The protein is Ent-trachylobane synthase KSL2, chloroplastic of Ricinus communis (Castor bean).